A 162-amino-acid polypeptide reads, in one-letter code: Phosphopantetheine adenylyltransferase (162 aa).

Serine 11 provides a ligand contact to substrate. Residues 11-12 (SF) and histidine 19 contribute to the ATP site. Lysine 43, valine 76, and arginine 90 together coordinate substrate. ATP-binding positions include 91–93 (GLR), glutamate 101, and 126–132 (HLYISSS).

Belongs to the bacterial CoaD family. Homohexamer. Requires Mg(2+) as cofactor.

It localises to the cytoplasm. The catalysed reaction is (R)-4'-phosphopantetheine + ATP + H(+) = 3'-dephospho-CoA + diphosphate. It participates in cofactor biosynthesis; coenzyme A biosynthesis; CoA from (R)-pantothenate: step 4/5. Reversibly transfers an adenylyl group from ATP to 4'-phosphopantetheine, yielding dephospho-CoA (dPCoA) and pyrophosphate. The chain is Phosphopantetheine adenylyltransferase from Streptococcus pneumoniae (strain CGSP14).